Here is a 327-residue protein sequence, read N- to C-terminus: MKFVDSARIVVKAGDGGNGCVSFRREKYVPKGGPDGGDGGRGGHVYLRANSQLATLLDFRYKKNYEALRGVHGQGSKKAGKTGKDIVINVPCGTLVKNSVSGEVICDLVEDGEEFLLARGGDGGRGNPHFTTSTRQAPRYAEPGGKGEELKVDLELKLMADVGLVGFPNAGKSTLISVLSAARPKIADYPFTTLVPNLGIVQYGEYKSFVMADIPGIIEGAAEGKGLGIQFLRHIERTKVLAVLVSGDGEDPVGEYRLLLGEMERFDPALLQKPRIIVVTKMDVVDEAFSLPDFEDDVPLIPVSSITRSGLEELRNALWNTINPSIP.

Positions 1–159 (MKFVDSARIV…LKVDLELKLM (159 aa)) constitute an Obg domain. The disordered stretch occupies residues 120 to 145 (GGDGGRGNPHFTTSTRQAPRYAEPGG). An OBG-type G domain is found at 160 to 323 (ADVGLVGFPN…LRNALWNTIN (164 aa)). GTP contacts are provided by residues 166–173 (GFPNAGKS), 191–195 (FTTLV), 213–216 (DIPG), 280–283 (TKMD), and 304–306 (SSI). Residues S173 and T193 each contribute to the Mg(2+) site.

This sequence belongs to the TRAFAC class OBG-HflX-like GTPase superfamily. OBG GTPase family. As to quaternary structure, monomer. Mg(2+) is required as a cofactor.

The protein localises to the cytoplasm. Functionally, an essential GTPase which binds GTP, GDP and possibly (p)ppGpp with moderate affinity, with high nucleotide exchange rates and a fairly low GTP hydrolysis rate. Plays a role in control of the cell cycle, stress response, ribosome biogenesis and in those bacteria that undergo differentiation, in morphogenesis control. The polypeptide is GTPase Obg (Prosthecochloris aestuarii (strain DSM 271 / SK 413)).